A 279-amino-acid polypeptide reads, in one-letter code: MSWFNRVKPSISSTAKRDVPEGLWWKCEECGAALHKKQMEASDHTCPQCGYHFRISPYKYFSLLFDNQKYVEFDDHLRAADPLHFVDTKKYPDRVSDTIEKSGKTEACRNAHGLCGGETLVISAMDFSFIGGSMGSVVGEKISRAVDKAIELQSPLLVISQSGGARMMEGAFSLMQMAKTAAKLSLLSEHRLPYISLMTDPTMGGITASFAMLGDINISEPKALIGFAGPRVIRDTIKRDLPEGFQRAEFLLEHGFIDRIIPRRELKSDLTTLLSLMKL.

The region spanning 23–279 (LWWKCEECGA…LTTLLSLMKL (257 aa)) is the CoA carboxyltransferase N-terminal domain. Residues Cys-27, Cys-30, Cys-46, and Cys-49 each coordinate Zn(2+). The segment at 27 to 49 (CEECGAALHKKQMEASDHTCPQC) adopts a C4-type zinc-finger fold.

Belongs to the AccD/PCCB family. As to quaternary structure, acetyl-CoA carboxylase is a heterohexamer composed of biotin carboxyl carrier protein (AccB), biotin carboxylase (AccC) and two subunits each of ACCase subunit alpha (AccA) and ACCase subunit beta (AccD). The cofactor is Zn(2+).

The protein resides in the cytoplasm. The enzyme catalyses N(6)-carboxybiotinyl-L-lysyl-[protein] + acetyl-CoA = N(6)-biotinyl-L-lysyl-[protein] + malonyl-CoA. It functions in the pathway lipid metabolism; malonyl-CoA biosynthesis; malonyl-CoA from acetyl-CoA: step 1/1. Functionally, component of the acetyl coenzyme A carboxylase (ACC) complex. Biotin carboxylase (BC) catalyzes the carboxylation of biotin on its carrier protein (BCCP) and then the CO(2) group is transferred by the transcarboxylase to acetyl-CoA to form malonyl-CoA. The polypeptide is Acetyl-coenzyme A carboxylase carboxyl transferase subunit beta (Chlorobium chlorochromatii (strain CaD3)).